Consider the following 95-residue polypeptide: MATVEVEHVTSVAVEIVETEVNQHPEEVFVEDAEKTNEDEEEKAAVITETPTVVEEEKKAEEVTETPEEKKTEALEEKQTEVAAAEEVAVEKAKE.

Repeat copies occupy residues 30–35, 39–43, 54–59, 67–71, 75–79, and 90–94. The 6 X 5 AA approximate repeats of V-E-E-K-K stretch occupies residues 30 to 94; the sequence is VEDAEKTNED…AEEVAVEKAK (65 aa). The segment at 54-95 is disordered; the sequence is VEEEKKAEEVTETPEEKKTEALEEKQTEVAAAEEVAVEKAKE. A compositionally biased stretch (basic and acidic residues) spans 55–80; the sequence is EEEKKAEEVTETPEEKKTEALEEKQT.

As to expression, low levels in roots (e.g. in cambium) and barely expressed in stems, shoots, flowers, siliques and leaves.

Its subcellular location is the cytoplasm. The protein localises to the cytosol. Functionally, binds calcium Ca(2+) and may act as a signal mediator to buffer Ca(2+). The polypeptide is Cytosolic calcium-binding protein 3 (Arabidopsis thaliana (Mouse-ear cress)).